The following is a 451-amino-acid chain: Tubby-like F-box protein 12 (451 aa).

Residues 57 to 112 enclose the F-box domain; the sequence is SRWVGLPPELLRDVMKRLEEGESNWPSRKDVVACAAVCRTWREICKDIVQSPEICG. Residues 387–406 are compositionally biased toward low complexity; it reads LEQQQQQQQQNHASSSSSAS. The disordered stretch occupies residues 387–407; that stretch reads LEQQQQQQQQNHASSSSSASD.

It belongs to the TUB family. Ubiquitous.

The protein is Tubby-like F-box protein 12 (TULP12) of Oryza sativa subsp. japonica (Rice).